Reading from the N-terminus, the 819-residue chain is MEGAAGGEEKKNRMSSERRKEKSRDAARSRRSKESEVFYELAHQLPLPHNVSSHLDKASVMRLTISYLRVRKLLDAGDLDIEDDMKAQMNCFYLKALDGFVMVLTDDGDMIYISDNVNKYMGLTQFELTGHSVFDFTHPCDHEEMREMLTHRNGPIKKGKEQNTQRSFFLRMKCTLTSRGRTMNIKSATWKVLHCTGHIHVYDTNSNQPQCGYKKPPMTCLVLICEPIPHPSNIEIPLDSKTFLSRHSLDMKFSYCDERITELMGYEPEELLGRSIYEYYHALDSDHLTKTHHDMFTKGQVTTGQYRMLAKRGGYVWVETQATVIYNTKNSQPQCIVCVNYVVSGIIQHDLIFSLQQTECVLKPVESSDMKMTQLFTKVESEDTSCLFDKLKKEPDALTLLAPAAGDTIISLDFGSDDTETEDQQLEDVPLYNDVMFPSSDDKLTSINLAMSPLPASETPKPLRSNADPALNQEVALKLEPNAESLELSFTMPQIQDQPASPSDGSTRQSSPEPNSPSEYCFDVDSDMVNVFKLELVEKLFAEDTEAKNPFSTQDTDLDLEMLAPYIPMDDDFQLRSFDQLSPLESSSPNPPSVSTAFQQTQLQEPTITTTTTEELKTVTKDSTEDIKILITSPSSTHTPKETTTATTSSPYSGTQSRTASPNRAGQGVIEQTEKSHPRSPNVLSVTLSQRNTVPEEELNPKIIALQNAQRKRKMEHDGSLFQAAGIGTLLQQPDDRAPATSLSWKRVKGCKSSGQNGMEQKTIILIPSDLACRLLGQSMDGSGLPQLTSYDCEVNAPIQGSRNLLQGEELLRALDQVN.

Positions 1–31 (MEGAAGGEEKKNRMSSERRKEKSRDAARSRR) are disordered. An interaction with TSGA10 region spans residues 1 to 402 (MEGAAGGEEK…KEPDALTLLA (402 aa)). Over residues 7–31 (GEEKKNRMSSERRKEKSRDAARSRR) the composition is skewed to basic and acidic residues. The 54-residue stretch at 18–71 (RRKEKSRDAARSRRSKESEVFYELAHQLPLPHNVSSHLDKASVMRLTISYLRVR) folds into the bHLH domain. The segment at 22-31 (KSRDAARSRR) is DNA-binding. Positions 86 to 159 (KAQMNCFYLK…THRNGPIKKG (74 aa)) constitute a PAS 1 domain. Residues 171–192 (RMKCTLTSRGRTMNIKSATWKV) form a required for heterodimer formation with ARNT region. Positions 229–299 (PHPSNIEIPL…KTHHDMFTKG (71 aa)) constitute a PAS 2 domain. Position 248 is a phosphoserine; by CK1 (Ser-248). In terms of domain architecture, PAC spans 303–346 (TGQYRMLAKRGGYVWVETQATVIYNTKNSQPQCIVCVNYVVSGI). The ODD stretch occupies residues 402-599 (APAAGDTIIS…NPPSVSTAFQ (198 aa)). At Pro-403 the chain carries 4-hydroxyproline. Residues 495–518 (IQDQPASPSDGSTRQSSPEPNSPS) show a composition bias toward polar residues. Residues 495-521 (IQDQPASPSDGSTRQSSPEPNSPSEYC) form a disordered region. Residues 532 to 576 (FKLELVEKLFAEDTEAKNPFSTQDTDLDLEMLAPYIPMDDDFQLR) form an NTAD region. Lys-533 carries the post-translational modification N6-acetyllysine; alternate. A Glycyl lysine isopeptide (Lys-Gly) (interchain with G-Cter in ubiquitin); alternate cross-link involves residue Lys-533. Glycyl lysine isopeptide (Lys-Gly) (interchain with G-Cter in ubiquitin) cross-links involve residues Lys-539 and Lys-548. Phosphoserine; by GSK3-beta is present on Ser-552. Thr-556 carries the phosphothreonine; by GSK3-beta modification. Pro-565 is subject to 4-hydroxyproline. Residue Ser-577 is modified to Phosphoserine; by PLK3. The ID stretch occupies residues 577 to 778 (SFDQLSPLES…SDLACRLLGQ (202 aa)). Residues 581–685 (LSPLESSSPN…SHPRSPNVLS (105 aa)) are disordered. Residues 582-613 (SPLESSSPNPPSVSTAFQQTQLQEPTITTTTT) are compositionally biased toward low complexity. A compositionally biased stretch (basic and acidic residues) spans 614–628 (EELKTVTKDSTEDIK). Positions 632 to 655 (TSPSSTHTPKETTTATTSSPYSGT) are enriched in low complexity. A Phosphoserine; by PLK3 modification is found at Ser-650. N6-acetyllysine is present on Lys-702. The Nuclear localization signal motif lies at 711–717 (RKRKMEH). The tract at residues 779–819 (SMDGSGLPQLTSYDCEVNAPIQGSRNLLQGEELLRALDQVN) is CTAD. Cys-793 is modified (S-nitrosocysteine). Asn-796 bears the (3S)-3-hydroxyasparagine mark.

In terms of assembly, interacts with the ARNT; forms a heterodimer that binds core DNA sequence 5'-TACGTG-3' within the hypoxia response element (HRE) of target gene promoters. Interacts with COPS5; the interaction increases the transcriptional activity of HIF1A through increased stability. Interacts with EP300 (via TAZ-type 1 domains); the interaction is stimulated in response to hypoxia and inhibited by CITED2. Interacts with CREBBP (via TAZ-type 1 domains). Interacts with NCOA1, NCOA2, APEX1 and HSP90. Interacts (hydroxylated within the ODD domain) with VHLL (via beta domain); the interaction, leads to polyubiquitination and subsequent HIF1A proteasomal degradation. During hypoxia, sumoylated HIF1A also binds VHL; the interaction promotes the ubiquitination of HIF1A. Interacts with SENP1; the interaction desumoylates HIF1A resulting in stabilization and activation of transcription. Interacts (via the ODD domain) with NAA10; the interaction appears not to acetylate HIF1A nor have any affect on protein stability, during hypoxia. Interacts with RWDD3; the interaction enhances HIF1A sumoylation. Interacts with TSGA10. Interacts with HIF3A. Interacts with RORA (via the DNA binding domain); the interaction enhances HIF1A transcription under hypoxia through increasing protein stability. Interaction with PSMA7 inhibits the transactivation activity of HIF1A under both normoxic and hypoxia-mimicking conditions. Interacts with USP20. Interacts with RACK1; promotes HIF1A ubiquitination and proteasome-mediated degradation. Interacts (via N-terminus) with USP19. Interacts with SIRT2. Interacts (deacetylated form) with EGLN1. Interacts with CBFA2T3. Interacts with HSP90AA1 and HSP90AB1. Interacts with DCUN1D1; this interaction increases the interaction between VHL and DCUN1D1. Interacts with HIF1AN. In terms of processing, S-nitrosylation of Cys-793 may be responsible for increased recruitment of p300 coactivator necessary for transcriptional activity of HIF-1 complex. Post-translationally, acetylation of Lys-533 by ARD1 increases interaction with VHL and stimulates subsequent proteasomal degradation. Deacetylation of Lys-702 by SIRT2 increases its interaction with and hydroxylation by EGLN1 thereby inactivating HIF1A activity by inducing its proteasomal degradation. Requires phosphorylation for DNA-binding. Phosphorylation at Ser-248 by CSNK1D/CK1 represses kinase activity and impairs ARNT binding. Phosphorylation by GSK3-beta and PLK3 promote degradation by the proteasome. In terms of processing, the iron and 2-oxoglutarate dependent 3-hydroxylation of asparagine is (S) stereospecific within HIF CTAD domains. Post-translationally, sumoylated; with SUMO1 under hypoxia. Sumoylation is enhanced through interaction with RWDD3. Both sumoylation and desumoylation seem to be involved in the regulation of its stability during hypoxia. Sumoylation can promote either its stabilization or its VHL-dependent degradation by promoting hydroxyproline-independent HIF1A-VHL complex binding, thus leading to HIF1A ubiquitination and proteasomal degradation. Desumoylation by SENP1 increases its stability amd transcriptional activity. There is a disaccord between various publications on the effect of sumoylation and desumoylation on its stability and transcriptional activity. In normoxia, is hydroxylated on Pro-403 and Pro-565 in the oxygen-dependent degradation domain (ODD) by EGLN1/PHD2 and EGLN2/PHD1. EGLN3/PHD3 has also been shown to hydroxylate Pro-565. The hydroxylated prolines promote interaction with VHL, initiating rapid ubiquitination and subsequent proteasomal degradation. Deubiquitinated by USP20. Under hypoxia, proline hydroxylation is impaired and ubiquitination is attenuated, resulting in stabilization. In normoxia, is hydroxylated on Asn-796 by HIF1AN, thus abrogating interaction with CREBBP and EP300 and preventing transcriptional activation. Repressed by iron ion, via Fe(2+) prolyl hydroxylase (PHD) enzymes-mediated hydroxylation and subsequent proteasomal degradation.

Its subcellular location is the cytoplasm. It localises to the nucleus. The protein localises to the nucleus speckle. With respect to regulation, induced by reactive oxygen species (ROS). Functionally, functions as a master transcriptional regulator of the adaptive response to hypoxia. Under hypoxic conditions, activates the transcription of over 40 genes, including erythropoietin, glucose transporters, glycolytic enzymes, vascular endothelial growth factor, HILPDA, and other genes whose protein products increase oxygen delivery or facilitate metabolic adaptation to hypoxia. Plays an essential role in embryonic vascularization, tumor angiogenesis and pathophysiology of ischemic disease. Heterodimerizes with ARNT; heterodimer binds to core DNA sequence 5'-TACGTG-3' within the hypoxia response element (HRE) of target gene promoters. Activation requires recruitment of transcriptional coactivators such as CREBBP and EP300. Activity is enhanced by interaction with NCOA1 and/or NCOA2. Interaction with redox regulatory protein APEX1 seems to activate CTAD and potentiates activation by NCOA1 and CREBBP. Involved in the axonal distribution and transport of mitochondria in neurons during hypoxia. In Eospalax fontanierii baileyi (Plateau zokor), this protein is Hypoxia-inducible factor 1-alpha (HIF1A).